We begin with the raw amino-acid sequence, 237 residues long: Sugar fermentation stimulation protein homolog (237 aa).

The protein belongs to the SfsA family.

The sequence is that of Sugar fermentation stimulation protein homolog from Synechocystis sp. (strain ATCC 27184 / PCC 6803 / Kazusa).